The following is a 595-amino-acid chain: Actin-histidine N-methyltransferase (595 aa).

The segment at 1–22 is disordered; the sequence is MGKKSRVKTQKSGTGATATVSP. Over residues 10–20 the composition is skewed to polar residues; that stretch reads QKSGTGATATV. S-adenosyl-L-methionine is bound by residues Arg75, 104–106, Arg254, 275–279, and 325–327; these read EGF, DMCNH, and SGF. The SET domain occupies 94–314; sequence EGFEMVNFKE…AGEQIYIFYG (221 aa). Ser513 carries the phosphoserine modification. The disordered stretch occupies residues 552–595; the sequence is LVNGENCIPNGTRSENEDLNQEENKRAVEDAKGSSSDSTDAVKK. Positions 573–583 are enriched in basic and acidic residues; the sequence is EENKRAVEDAK. Over residues 584 to 595 the composition is skewed to polar residues; the sequence is GSSSDSTDAVKK.

Belongs to the class V-like SAM-binding methyltransferase superfamily. SETD3 actin-histidine methyltransferase family. Interacts with MYOD1. Phosphorylated by GSK3B, which is required for recognition by the SCF(FBXW7) complex and subsequent degradation. In terms of processing, ubiquitinated by the SCF(FBXW7) complex following phosphorylation by GSK3B, leading to its degradation by the proteasome.

It is found in the cytoplasm. It localises to the nucleus. The enzyme catalyses L-histidyl-[protein] + S-adenosyl-L-methionine = N(tele)-methyl-L-histidyl-[protein] + S-adenosyl-L-homocysteine + H(+). Protein-histidine N-methyltransferase that specifically mediates 3-methylhistidine (tele-methylhistidine) methylation of actin at 'His-73'. Histidine methylation of actin is required for smooth muscle contraction of the laboring uterus during delivery. Does not have protein-lysine N-methyltransferase activity and probably only catalyzes histidine methylation of actin. The sequence is that of Actin-histidine N-methyltransferase from Otolemur garnettii (Small-eared galago).